Consider the following 1008-residue polypeptide: Chitin synthase C (1008 aa).

A disordered region spans residues 1 to 160; that stretch reads MIYEMMVMKR…GGRTIDPNNR (160 aa). Residues 10–19 show a composition bias toward low complexity; sequence RSANSRAQNN. Polar residues predominate over residues 34 to 45; sequence ESPSRPVSSLGN. The N-linked (GlcNAc...) asparagine glycan is linked to N312. 5 consecutive transmembrane segments (helical) span residues 642-662, 682-702, 717-737, 755-775, and 787-807; these read FMQLIFTYFGLANFYLVFYFI, IFVILRYACILVMCLQFIISM, IIVYSIIMFYTIFCTMYLVVI, LFVNIVMSLLSTVGLYFYASF, and SAAYFIMLPSYICTLQVYAFC. N-linked (GlcNAc...) asparagine glycosylation occurs at N833. 2 helical membrane-spanning segments follow: residues 887–907 and 910–930; these read MVSIWMVANVILAMAISEVYG and AGGTNIYLAIILWSVVVLALI. N-linked (GlcNAc...) asparagine glycosylation occurs at N961.

It belongs to the chitin synthase family. Class II subfamily.

It localises to the cell membrane. It carries out the reaction [(1-&gt;4)-N-acetyl-beta-D-glucosaminyl](n) + UDP-N-acetyl-alpha-D-glucosamine = [(1-&gt;4)-N-acetyl-beta-D-glucosaminyl](n+1) + UDP + H(+). Polymerizes chitin, a structural polymer of the cell wall and septum, by transferring the sugar moiety of UDP-GlcNAc to the non-reducing end of the growing chitin polymer. Involved in cell wall integrity and mycelial morphology. Plays an important role in septal growth or maintenance. Acts as a positive regulator of conidiation, cellular responses to oxidative stresses, and the production of malic acid. Negatively regulates the citric acid production. The chain is Chitin synthase C from Aspergillus niger (strain ATCC MYA-4892 / CBS 513.88 / FGSC A1513).